A 658-amino-acid polypeptide reads, in one-letter code: D-ornithine--citrate ligase (658 aa).

This sequence belongs to the IucA/IucC family.

The catalysed reaction is D-ornithine + citrate + ATP = N(5)-[(S)-citryl]-D-ornithine + AMP + diphosphate + H(+). The protein operates within siderophore biosynthesis. In terms of biological role, involved in the biosynthesis of the siderophore staphyloferrin A. Catalyzes the ATP-dependent condensation of D-ornithine and citrate to form a citryl-D-ornithine intermediate. This chain is D-ornithine--citrate ligase, found in Staphylococcus aureus (strain NCTC 8325 / PS 47).